The following is a 120-amino-acid chain: uncharacterized protein (120 aa).

The tract at residues 79–120 is disordered; that stretch reads TGNEIPPEPEQEVVASPVTEQKKAEPSAPPKGSKKKKRGKKK. Basic residues predominate over residues 110–120; that stretch reads GSKKKKRGKKK.

This is an uncharacterized protein from Schizosaccharomyces pombe (strain 972 / ATCC 24843) (Fission yeast).